Reading from the N-terminus, the 206-residue chain is Guanylate kinase (206 aa).

Positions 3 to 183 (GNLYILSAPS…ALTELKSILT (181 aa)) constitute a Guanylate kinase-like domain. 10-17 (APSGAGKS) is a binding site for ATP.

Belongs to the guanylate kinase family.

It is found in the cytoplasm. It catalyses the reaction GMP + ATP = GDP + ADP. In terms of biological role, essential for recycling GMP and indirectly, cGMP. The sequence is that of Guanylate kinase from Haemophilus ducreyi (strain 35000HP / ATCC 700724).